The chain runs to 762 residues: uncharacterized protein (762 aa).

Residues 1 to 26 are disordered; the sequence is MENLKSASPEEDSPRHGDNMGKPKRI. The span at 12–21 shows a compositional bias: basic and acidic residues; it reads DSPRHGDNMG. Positions 30–57 form a DNA-binding region, zn(2)-C6 fungal-type; it reads CDMCRKRKIRCDGKQPACSNCVSHGIPC. Residues 647-668 form a disordered region; that stretch reads QSHVPPRISSNHSDTSVKSNSP.

It is found in the nucleus. This is an uncharacterized protein from Schizosaccharomyces pombe (strain 972 / ATCC 24843) (Fission yeast).